The primary structure comprises 235 residues: Regulator of G-protein signaling 18 (235 aa).

Ser-49 carries the phosphoserine modification. Residues 86–202 (SFDKLLSHRD…LKSETYLHLI (117 aa)) form the RGS domain. Phosphoserine occurs at positions 216 and 218.

Expressed in bone marrow, spleen, fetal liver and lung. At very low levels expressed in heart.

It localises to the cytoplasm. Functionally, inhibits signal transduction by increasing the GTPase activity of G protein alpha subunits thereby driving them into their inactive GDP-bound form. Binds to G(i) alpha-1, G(i) alpha-2, G(i) alpha-3 and G(q) alpha. The protein is Regulator of G-protein signaling 18 (Rgs18) of Mus musculus (Mouse).